The following is a 1155-amino-acid chain: MKKNIFITSLLILLLLLSSCTGDTCIDPDDFGFITFNVSSRYNPGEITSRHEGDQVTPWRDSAYKVNGYPLTIMVRPWNYILGDKNTSGQLSAWCPWYGQKNNTTTLAPFCVKLQPCTFWDNARFDMCTPNPENRNDAMISNPPCIMTDGVGLYFLIAAKNTDPNISPDSQRRPQGITKHLGELTSSVGYEFYSISSTGQFLKAGGINYQYNGEDKSKYAQSPLYFKIIDKFYDDNSGQYRLVIKSGVSDTRPDPLQFLTDLIKKVLFGKDGMIKKTYQQIIDTPGYKISVSAILTLYIMFTVLSFLIGNINLTHVELIIRIFKISIISILLSTDKAWTFFHDYLFVFFIDGVQQILQIINEAAATGPGSQSLLGLLISTQTLSKLFSLLFVDWLGFIYIILYLIALYFIFFLIFKATIIYLTALITIGMIIIMGPIFICFMLFNITRSLFENWLRQLISYALQPIILFAGIAFISMIIRTEIYSTLGFGVCKHDFPNLGPINEIFGSFLEDIDPSLGNSIFYWWFPVPMKGGINNFHKAKILVPNDHIVVDASCKNDHDKCKHCAAYECIDERYIELPFLDLVKDSTRINNFINGKFVQLDGILLIFVSIYLLSKFNDTAVSTAQFIAGTSGNLTDIQKVNQQSYESLSQQINRPLNYVAQAVSAPVTSRISAGTEQASMFFAEKFENMMMERLEKQALSSSANKAVQNEVKRKYGIDSKDVKMNAIKDYEDGISGLLKNLPKRNELKVKELSQMKFIQLRDKISANKYDVQDYAALSKEQKTELDKLLKDANLRALASEANFTKDYQEAYKQAHQEMSGRGIGLFGKNIGVLRSWQEMEHRVNVKRKLKEEKRIGIGEKIYAGYTGIKRAALTKILGKDLRDAYEGNLTSAEWHDFEYNDPRLRTYSEKLKDDEKAREYEELRMHINKETIAVQADILSPEYLVKLEKAGRQSDVEYYQGLAQKQLIHDVHSRLFEEGEPVMMGDRFMREKATDSQMRDMIDNAHKKYAELIDVDRYTRRQEYYDIIHEKAKENLEQTYKELKDHFKSDNISIEEMPSLIAQKVKDTNTGSEIDKKITEEINNFNTDVKNYEYSTAVLNKIEDRKQAIMNEVNAQIDKINKYRASAKMEQYVKPILNEGRKLRTLEDHLKNMT.

The first 19 residues, 1–19, serve as a signal peptide directing secretion; that stretch reads MKKNIFITSLLILLLLLSS. The N-palmitoyl cysteine moiety is linked to residue Cys-20. A lipid anchor (S-diacylglycerol cysteine) is attached at Cys-20. The next 4 helical transmembrane spans lie at 289-309, 395-415, 424-444, and 459-479; these read ISVS…FLIG, LGFI…FLIF, ALIT…FMLF, and ISYA…SMII.

This sequence belongs to the TrbL/VirB6 family.

The protein resides in the cell membrane. This is an uncharacterized protein from Rickettsia prowazekii (strain Madrid E).